The following is a 140-amino-acid chain: uncharacterized protein (140 aa).

Tandem repeats lie at residues 1 to 10 (MFARLCPVSE), 11 to 20 (TFGRLCPVSE), 21 to 30 (TFARLCPVSE), 31 to 40 (TFARLCPVSE), 41 to 50 (TFARLCPVSE), 51 to 60 (TFGRLCPVSE), 61 to 70 (MFGRLSPVSE), 71 to 80 (TFGRLCPVSE), 81 to 90 (TFGRLCPVSE), 91 to 100 (MFARLCPVSE), 101 to 110 (TFGRLSPVSE), 111 to 120 (MFGRLCPVSE), 121 to 130 (MFGRLCPVSE), and 131 to 140 (MFGRLCPVIT). The tract at residues 1-140 (MFARLCPVSE…MFGRLCPVIT (140 aa)) is 14 X 10 AA tandem repeats of [MT]-F-[AG]-R-L-[CS]-P-V-[SI]-[ET].

This is an uncharacterized protein from Homo sapiens (Human).